The following is a 673-amino-acid chain: UvrABC system protein B (673 aa).

A Helicase ATP-binding domain is found at E26–R414. G39–T46 contributes to the ATP binding site. The Beta-hairpin motif lies at Y92–V115. The Helicase C-terminal domain maps to Q431 to L597. The UVR domain occupies Q633–L668.

Belongs to the UvrB family. As to quaternary structure, forms a heterotetramer with UvrA during the search for lesions. Interacts with UvrC in an incision complex.

The protein resides in the cytoplasm. Functionally, the UvrABC repair system catalyzes the recognition and processing of DNA lesions. A damage recognition complex composed of 2 UvrA and 2 UvrB subunits scans DNA for abnormalities. Upon binding of the UvrA(2)B(2) complex to a putative damaged site, the DNA wraps around one UvrB monomer. DNA wrap is dependent on ATP binding by UvrB and probably causes local melting of the DNA helix, facilitating insertion of UvrB beta-hairpin between the DNA strands. Then UvrB probes one DNA strand for the presence of a lesion. If a lesion is found the UvrA subunits dissociate and the UvrB-DNA preincision complex is formed. This complex is subsequently bound by UvrC and the second UvrB is released. If no lesion is found, the DNA wraps around the other UvrB subunit that will check the other stand for damage. In Shigella flexneri, this protein is UvrABC system protein B.